Consider the following 355-residue polypeptide: Protein ATP1B4 (355 aa).

Over 1–108 (MRRQLRSRRA…SLARTGQSWS (108 aa)) the chain is Nuclear. The interval 33 to 77 (ADEEEEAEEEARVMVVPDLEEEEEEEEEKEEEEKEEEDSHSQETD) is disordered. Residues 50 to 68 (DLEEEEEEEEEKEEEEKEE) are compositionally biased toward acidic residues. A helical; Signal-anchor for type II membrane protein transmembrane segment spans residues 109–129 (LILVIYFFFYASLAAVITLCM). Residues 130-355 (YTLFLTISPY…RVIFTLNIET (226 aa)) lie on the Perinuclear space side of the membrane.

The protein belongs to the X(+)/potassium ATPases subunit beta family. As to quaternary structure, associates with a SMAD7-transcriptional complex. Interacts with SNW1 and TOR1AIP1. Does not associate with known Na,K-ATPase alpha-subunits.

The protein resides in the nucleus inner membrane. Functionally, may act as a transcriptional coregulator during muscle development through its interaction with SNW1. Has lost its ancestral function as a Na,K-ATPase beta-subunit. The sequence is that of Protein ATP1B4 (ATP1B4) from Bos taurus (Bovine).